A 161-amino-acid chain; its full sequence is Nucleotide-binding protein Tcr_1902 (161 aa).

This sequence belongs to the YajQ family.

Functionally, nucleotide-binding protein. The protein is Nucleotide-binding protein Tcr_1902 of Hydrogenovibrio crunogenus (strain DSM 25203 / XCL-2) (Thiomicrospira crunogena).